The primary structure comprises 914 residues: Protein translocase subunit SecA (914 aa).

ATP contacts are provided by residues Q87, 105 to 109, and D500; that span reads GEGKT. The Zn(2+) site is built by C898, C900, C909, and H910.

Belongs to the SecA family. As to quaternary structure, monomer and homodimer. Part of the essential Sec protein translocation apparatus which comprises SecA, SecYEG and auxiliary proteins SecDF-YajC and YidC. It depends on Zn(2+) as a cofactor.

It is found in the cell inner membrane. The protein resides in the cytoplasm. The catalysed reaction is ATP + H2O + cellular proteinSide 1 = ADP + phosphate + cellular proteinSide 2.. Its function is as follows. Part of the Sec protein translocase complex. Interacts with the SecYEG preprotein conducting channel. Has a central role in coupling the hydrolysis of ATP to the transfer of proteins into and across the cell membrane, serving as an ATP-driven molecular motor driving the stepwise translocation of polypeptide chains across the membrane. The protein is Protein translocase subunit SecA of Acidithiobacillus ferrooxidans (strain ATCC 23270 / DSM 14882 / CIP 104768 / NCIMB 8455) (Ferrobacillus ferrooxidans (strain ATCC 23270)).